Reading from the N-terminus, the 249-residue chain is Probable septum site-determining protein MinC (249 aa).

The segment at 116-149 (AAVSPPPPPPPPPARAEPAAPVARPAPGRMQRNA) is disordered. Residues 119–130 (SPPPPPPPPPAR) show a composition bias toward pro residues. Positions 131 to 142 (AEPAAPVARPAP) are enriched in low complexity.

Belongs to the MinC family. As to quaternary structure, interacts with MinD and FtsZ.

Its function is as follows. Cell division inhibitor that blocks the formation of polar Z ring septums. Rapidly oscillates between the poles of the cell to destabilize FtsZ filaments that have formed before they mature into polar Z rings. Prevents FtsZ polymerization. This is Probable septum site-determining protein MinC from Xanthomonas campestris pv. campestris (strain ATCC 33913 / DSM 3586 / NCPPB 528 / LMG 568 / P 25).